The sequence spans 156 residues: Small ribosomal subunit protein uS7 (156 aa).

Belongs to the universal ribosomal protein uS7 family. As to quaternary structure, part of the 30S ribosomal subunit. Contacts proteins S9 and S11.

One of the primary rRNA binding proteins, it binds directly to 16S rRNA where it nucleates assembly of the head domain of the 30S subunit. Is located at the subunit interface close to the decoding center, probably blocks exit of the E-site tRNA. The protein is Small ribosomal subunit protein uS7 of Mycoplasmopsis synoviae (strain 53) (Mycoplasma synoviae).